Reading from the N-terminus, the 478-residue chain is UDP-N-acetylmuramate--L-alanine ligase (478 aa).

Residue 122 to 128 (GTHGKTT) participates in ATP binding.

Belongs to the MurCDEF family.

The protein resides in the cytoplasm. It catalyses the reaction UDP-N-acetyl-alpha-D-muramate + L-alanine + ATP = UDP-N-acetyl-alpha-D-muramoyl-L-alanine + ADP + phosphate + H(+). It functions in the pathway cell wall biogenesis; peptidoglycan biosynthesis. In terms of biological role, cell wall formation. This chain is UDP-N-acetylmuramate--L-alanine ligase, found in Stenotrophomonas maltophilia (strain R551-3).